Consider the following 473-residue polypeptide: ATP synthase subunit beta (473 aa).

An ATP-binding site is contributed by 158–165; sequence GGAGVGKT.

This sequence belongs to the ATPase alpha/beta chains family. As to quaternary structure, F-type ATPases have 2 components, CF(1) - the catalytic core - and CF(0) - the membrane proton channel. CF(1) has five subunits: alpha(3), beta(3), gamma(1), delta(1), epsilon(1). CF(0) has three main subunits: a(1), b(2) and c(9-12). The alpha and beta chains form an alternating ring which encloses part of the gamma chain. CF(1) is attached to CF(0) by a central stalk formed by the gamma and epsilon chains, while a peripheral stalk is formed by the delta and b chains.

Its subcellular location is the cell membrane. It carries out the reaction ATP + H2O + 4 H(+)(in) = ADP + phosphate + 5 H(+)(out). In terms of biological role, produces ATP from ADP in the presence of a proton gradient across the membrane. The catalytic sites are hosted primarily by the beta subunits. In Geobacillus sp. (strain WCH70), this protein is ATP synthase subunit beta.